Reading from the N-terminus, the 1117-residue chain is Protocadherin-11 X-linked (1117 aa).

Positions 1-23 (MDLLSGTHIFAVLLACIVFQSGA) are cleaved as a signal peptide. Over 24 to 812 (QEKNYTIREE…ASSPSSDYVK (789 aa)) the chain is Extracellular. N-linked (GlcNAc...) asparagine glycans are attached at residues Asn-27 and Asn-48. 7 Cadherin domains span residues 27–139 (NYTI…APLF), 140–249 (PATV…RPVF), 250–355 (KENE…IPSI), 362–466 (NPIN…APVF), 467–570 (TQPF…SPVF), 571–673 (THNE…KPVF), and 677–795 (SSNY…TPVT). The N-linked (GlcNAc...) asparagine glycan is linked to Asn-344. Asn-553 carries an N-linked (GlcNAc...) asparagine glycan. Residues 813-833 (IVVAIVAGTITVILVIFITAV) traverse the membrane as a helical segment. The Cytoplasmic segment spans residues 834–1117 (VRCQQSPHLK…DGNSDPESGK (284 aa)). Over residues 1029–1039 (TVEIWTHPQPQ) the composition is skewed to polar residues. The disordered stretch occupies residues 1029-1117 (TVEIWTHPQP…DGNSDPESGK (89 aa)).

Expressed in adrenal gland, brain, heart, kidney, lung, prostate, skeletal muscle, testis and thymus.

The protein resides in the cell membrane. Potential calcium-dependent cell-adhesion protein. The sequence is that of Protocadherin-11 X-linked (PCDH11X) from Sus scrofa (Pig).